Reading from the N-terminus, the 126-residue chain is Fluoride-specific ion channel FluC (126 aa).

4 helical membrane-spanning segments follow: residues 4–24, 35–55, 68–88, and 103–123; these read SILA…FLGI, LGTF…VAGF, FVIT…AEVV, and IVIH…TVSL. Residues G75 and S78 each contribute to the Na(+) site.

Belongs to the fluoride channel Fluc/FEX (TC 1.A.43) family.

The protein resides in the cell inner membrane. It carries out the reaction fluoride(in) = fluoride(out). Na(+) is not transported, but it plays an essential structural role and its presence is essential for fluoride channel function. Its function is as follows. Fluoride-specific ion channel. Important for reducing fluoride concentration in the cell, thus reducing its toxicity. The polypeptide is Fluoride-specific ion channel FluC (Paraburkholderia xenovorans (strain LB400)).